The primary structure comprises 483 residues: Membrane-bound lytic murein transglycosylase F (483 aa).

The signal sequence occupies residues 1–18 (MKGLIARFIAGFALLLWA). Residues 19-267 (WDMVFPWQQL…RIEEKYFNHL (249 aa)) form a non-LT domain region. Positions 269 to 483 (HFDYVDIQSY…SKESDSTLKE (215 aa)) are LT domain. Residue Glu-312 is part of the active site. The tract at residues 459–483 (QIQNNEEQSSVPQEISKESDSTLKE) is disordered. The span at 473–483 (ISKESDSTLKE) shows a compositional bias: basic and acidic residues.

The protein in the N-terminal section; belongs to the bacterial solute-binding protein 3 family. This sequence in the C-terminal section; belongs to the transglycosylase Slt family.

It localises to the cell outer membrane. It catalyses the reaction Exolytic cleavage of the (1-&gt;4)-beta-glycosidic linkage between N-acetylmuramic acid (MurNAc) and N-acetylglucosamine (GlcNAc) residues in peptidoglycan, from either the reducing or the non-reducing ends of the peptidoglycan chains, with concomitant formation of a 1,6-anhydrobond in the MurNAc residue.. Its function is as follows. Murein-degrading enzyme that degrades murein glycan strands and insoluble, high-molecular weight murein sacculi, with the concomitant formation of a 1,6-anhydromuramoyl product. Lytic transglycosylases (LTs) play an integral role in the metabolism of the peptidoglycan (PG) sacculus. Their lytic action creates space within the PG sacculus to allow for its expansion as well as for the insertion of various structures such as secretion systems and flagella. The polypeptide is Membrane-bound lytic murein transglycosylase F (Actinobacillus pleuropneumoniae serotype 7 (strain AP76)).